The following is a 263-amino-acid chain: Shikimate dehydrogenase (NADP(+)) (263 aa).

Shikimate is bound by residues 14–16 (SLS) and Thr-60. Lys-64 acts as the Proton acceptor in catalysis. Residues Asn-85 and Asp-100 each contribute to the shikimate site. Residues 123 to 127 (GAGGA), 146 to 151 (NRTPQR), and Leu-205 each bind NADP(+). Residue Tyr-207 participates in shikimate binding. Gly-228 is an NADP(+) binding site.

Belongs to the shikimate dehydrogenase family. As to quaternary structure, homodimer.

The enzyme catalyses shikimate + NADP(+) = 3-dehydroshikimate + NADPH + H(+). It functions in the pathway metabolic intermediate biosynthesis; chorismate biosynthesis; chorismate from D-erythrose 4-phosphate and phosphoenolpyruvate: step 4/7. In terms of biological role, involved in the biosynthesis of the chorismate, which leads to the biosynthesis of aromatic amino acids. Catalyzes the reversible NADPH linked reduction of 3-dehydroshikimate (DHSA) to yield shikimate (SA). The polypeptide is Shikimate dehydrogenase (NADP(+)) (Thermus thermophilus (strain ATCC BAA-163 / DSM 7039 / HB27)).